An 86-amino-acid polypeptide reads, in one-letter code: Translation initiation factor IF-1 2 (86 aa).

The region spanning 1-72 (MAKEELLEME…TKARISFRHK (72 aa)) is the S1-like domain.

Belongs to the IF-1 family. Component of the 30S ribosomal translation pre-initiation complex which assembles on the 30S ribosome in the order IF-2 and IF-3, IF-1 and N-formylmethionyl-tRNA(fMet); mRNA recruitment can occur at any time during PIC assembly.

The protein resides in the cytoplasm. One of the essential components for the initiation of protein synthesis. Stabilizes the binding of IF-2 and IF-3 on the 30S subunit to which N-formylmethionyl-tRNA(fMet) subsequently binds. Helps modulate mRNA selection, yielding the 30S pre-initiation complex (PIC). Upon addition of the 50S ribosomal subunit IF-1, IF-2 and IF-3 are released leaving the mature 70S translation initiation complex. The sequence is that of Translation initiation factor IF-1 2 from Aromatoleum aromaticum (strain DSM 19018 / LMG 30748 / EbN1) (Azoarcus sp. (strain EbN1)).